The sequence spans 49 residues: Small ribosomal subunit protein eS31 (49 aa).

Zn(2+) contacts are provided by C21, C24, C39, and C42. The C4-type zinc finger occupies 21 to 42 (CPRCGPGTFLADHKNRLTCGKC).

The protein belongs to the eukaryotic ribosomal protein eS31 family. As to quaternary structure, part of the 30S ribosomal subunit. It depends on Zn(2+) as a cofactor.

The polypeptide is Small ribosomal subunit protein eS31 (Methanosarcina barkeri (strain Fusaro / DSM 804)).